Consider the following 89-residue polypeptide: Barrier-to-autointegration factor (89 aa).

Position 1 is an N-acetylmethionine (M1). T2 carries the post-translational modification N-acetylthreonine; in Barrier-to-autointegration factor, N-terminally processed. Phosphothreonine; by VRK1 and VRK2 is present on residues T2 and T3. At S4 the chain carries Phosphoserine; by VRK1 and VRK2. Residues 20 to 35 (VGSLAGIGDVLSKRLE) form the HhH domain.

It belongs to the BAF family. As to quaternary structure, homodimer. Heterodimerizes with BANF2. Interacts with ANKLE2/LEM4, leading to decreased phosphorylation by VRK1 and promoting dephosphorylation by protein phosphatase 2A (PP2A). Binds non-specifically to double-stranded DNA, and is found as a hexamer or dodecamer upon DNA binding. Binds to LEM domain-containing nuclear proteins such as LEMD3/MAN1, TMPO/LAP2 and EMD (emerin). Interacts with ANKLE1 (via LEM domain); the interaction may favor BANF1 dimerization. Interacts with CRX and LMNA (lamin-A). Binds linker histone H1.1 and core histones H3. Interacts with LEMD2 (via LEM domain). Interacts with PARP1; interaction takes place in response to oxidative DNA damage. Post-translationally, ser-4 is the major site of phosphorylation as compared to Thr-2 and Thr-3. Phosphorylation on Thr-2; Thr-3 and Ser-4 disrupts its ability to bind DNA and reduces its ability to bind LEM domain-containing proteins. Non phosphorylated BAF seems to enhance binding between EMD and LMNA. Dephosphorylated by protein phosphatase 2A (PP2A) following interaction with ANKLE2/LEM4 during mitotic exit, leading to mitotic nuclear envelope reassembly.

The protein resides in the nucleus. The protein localises to the chromosome. Its subcellular location is the nucleus envelope. It is found in the cytoplasm. Its function is as follows. Non-specific DNA-binding protein that plays key roles in mitotic nuclear reassembly, chromatin organization, DNA damage response, gene expression and intrinsic immunity against foreign DNA. Contains two non-specific double-stranded DNA (dsDNA)-binding sites which promote DNA cross-bridging. Plays a key role in nuclear membrane reformation at the end of mitosis by driving formation of a single nucleus in a spindle-independent manner. Transiently cross-bridges anaphase chromosomes via its ability to bridge distant DNA sites, leading to the formation of a dense chromatin network at the chromosome ensemble surface that limits membranes to the surface. Also acts as a negative regulator of innate immune activation by restricting CGAS activity toward self-DNA upon acute loss of nuclear membrane integrity. Outcompetes CGAS for DNA-binding, thereby preventing CGAS activation and subsequent damaging autoinflammatory responses. Also involved in DNA damage response: interacts with PARP1 in response to oxidative stress, thereby inhibiting the ADP-ribosyltransferase activity of PARP1. Involved in the recognition of exogenous dsDNA in the cytosol: associates with exogenous dsDNA immediately after its appearance in the cytosol at endosome breakdown and is required to avoid autophagy. The protein is Barrier-to-autointegration factor of Mus musculus (Mouse).